A 253-amino-acid chain; its full sequence is tRNA pseudouridine synthase A (253 aa).

The active-site Nucleophile is the aspartate 53. Position 111 (tyrosine 111) interacts with substrate.

It belongs to the tRNA pseudouridine synthase TruA family. Homodimer.

The catalysed reaction is uridine(38/39/40) in tRNA = pseudouridine(38/39/40) in tRNA. Functionally, formation of pseudouridine at positions 38, 39 and 40 in the anticodon stem and loop of transfer RNAs. The polypeptide is tRNA pseudouridine synthase A (Chlorobium luteolum (strain DSM 273 / BCRC 81028 / 2530) (Pelodictyon luteolum)).